The sequence spans 296 residues: Uracil phosphoribosyltransferase, chloroplastic (296 aa).

The N-terminal 61 residues, 1 to 61 (MACSIGNAFR…SSSLSRRTIR (61 aa)), are a transit peptide targeting the chloroplast. At alanine 2 the chain carries N-acetylalanine. 148-151 (REPI) lines the GTP pocket. 5-phospho-alpha-D-ribose 1-diphosphate is bound by residues arginine 158, arginine 183, aspartate 211, 216-219 (TGGT), and aspartate 282. Uracil is bound at residue 281–283 (GDA).

This sequence belongs to the UPRTase family. Mg(2+) is required as a cofactor.

The protein resides in the plastid. The protein localises to the chloroplast. The catalysed reaction is UMP + diphosphate = 5-phospho-alpha-D-ribose 1-diphosphate + uracil. It participates in pyrimidine metabolism; UMP biosynthesis via salvage pathway; UMP from uracil: step 1/1. Allosterically activated by GTP. In terms of biological role, uracil phosphoribosyltransferase (UPRT) that catalyzes the conversion of uracil and 5-phospho-alpha-D-ribose 1-diphosphate (PRPP) to UMP and diphosphate. Is probably the only functional UPRT, since the dual-domain proteins of the UKL family seem to lack this activity. This is Uracil phosphoribosyltransferase, chloroplastic (UPP) from Arabidopsis thaliana (Mouse-ear cress).